A 512-amino-acid polypeptide reads, in one-letter code: Spermatocyte protein spe-8 (512 aa).

Residues 1 to 85 are disordered; the sequence is MRSKSSEGDL…PKPSSDNNNS (85 aa). Basic and acidic residues predominate over residues 15–41; the sequence is TQSREDKETTATYSEDTKPETQKERNA. A compositionally biased stretch (pro residues) spans 68–78; that stretch reads EAPPPPPPPKP. The SH2 domain occupies 114 to 205; it reads FYHGFMGRNE…YEGMTLICGL (92 aa). The Protein kinase domain occupies 217-485; the sequence is VTLNKKLGEG…KEEVGFHEIE (269 aa). ATP contacts are provided by residues 223–231 and Lys-250; that span reads LGEGQFGEV. The active-site Proton acceptor is Asp-344.

This sequence belongs to the protein kinase superfamily. Tyr protein kinase family. Fes/fps subfamily. Expression is restricted to male germline.

It is found in the cell membrane. It localises to the cytoplasm. It carries out the reaction L-tyrosyl-[protein] + ATP = O-phospho-L-tyrosyl-[protein] + ADP + H(+). In terms of biological role, probable non-receptor tyrosine-protein kinase which plays a role in spermatid activation (spermiogenesis) in hermaphrodites. This chain is Spermatocyte protein spe-8, found in Caenorhabditis elegans.